The following is a 363-amino-acid chain: GDSL esterase/lipase At3g14220 (363 aa).

The N-terminal stretch at 1 to 28 is a signal peptide; sequence MAKNRNLVFFLGVLASFTLSSFPVTVSG. S39 acts as the Nucleophile in catalysis. Catalysis depends on residues D318 and H321.

The protein belongs to the 'GDSL' lipolytic enzyme family.

It is found in the secreted. The sequence is that of GDSL esterase/lipase At3g14220 from Arabidopsis thaliana (Mouse-ear cress).